Here is a 101-residue protein sequence, read N- to C-terminus: Protein mes1 (101 aa).

Residues 1–19 (MVNTDNKENEPPNMEKAHM) are compositionally biased toward basic and acidic residues. The segment at 1-101 (MVNTDNKENE…RSPNPLLSMR (101 aa)) is disordered.

Interacts with slp1.

It localises to the cytoplasm. The protein resides in the nucleus. Functionally, specifically required for meiosis II (MII). Binds to slp1, an activator of the anapahase promoting complex/cyclcosome (APC/C), and counteracts its function in promoting proteolysis of cdc13. By suppressing the degradation of cdc13 at anaphase I this protein may help maintain a sufficient level of cdc2 kinase activity to complete MII. The polypeptide is Protein mes1 (mes1) (Schizosaccharomyces pombe (strain 972 / ATCC 24843) (Fission yeast)).